The sequence spans 383 residues: S-adenosylmethionine synthase (383 aa).

His15 contacts ATP. Position 17 (Asp17) interacts with Mg(2+). K(+) is bound at residue Glu43. Glu56 and Gln99 together coordinate L-methionine. A flexible loop region spans residues 99-109 (QSSDINQGVDR). ATP-binding positions include 164–166 (DAK), 230–231 (RF), Asp239, 245–246 (RK), Ala262, and Lys266. Residue Asp239 participates in L-methionine binding. An L-methionine-binding site is contributed by Lys270.

It belongs to the AdoMet synthase family. In terms of assembly, homotetramer; dimer of dimers. Requires Mg(2+) as cofactor. It depends on K(+) as a cofactor.

The protein resides in the cytoplasm. The catalysed reaction is L-methionine + ATP + H2O = S-adenosyl-L-methionine + phosphate + diphosphate. Its pathway is amino-acid biosynthesis; S-adenosyl-L-methionine biosynthesis; S-adenosyl-L-methionine from L-methionine: step 1/1. Its function is as follows. Catalyzes the formation of S-adenosylmethionine (AdoMet) from methionine and ATP. The overall synthetic reaction is composed of two sequential steps, AdoMet formation and the subsequent tripolyphosphate hydrolysis which occurs prior to release of AdoMet from the enzyme. The protein is S-adenosylmethionine synthase of Mannheimia succiniciproducens (strain KCTC 0769BP / MBEL55E).